The primary structure comprises 505 residues: ATP synthase subunit alpha (505 aa).

The disordered stretch occupies residues 118-138 (VDGLGPINTTNTRPIESPAPG). An ATP-binding site is contributed by 172-179 (GDRQTGKT).

This sequence belongs to the ATPase alpha/beta chains family. As to quaternary structure, F-type ATPases have 2 components, CF(1) - the catalytic core - and CF(0) - the membrane proton channel. CF(1) has five subunits: alpha(3), beta(3), gamma(1), delta(1), epsilon(1). CF(0) has three main subunits: a(1), b(2) and c(9-12). The alpha and beta chains form an alternating ring which encloses part of the gamma chain. CF(1) is attached to CF(0) by a central stalk formed by the gamma and epsilon chains, while a peripheral stalk is formed by the delta and b chains.

The protein resides in the cell membrane. The catalysed reaction is ATP + H2O + 4 H(+)(in) = ADP + phosphate + 5 H(+)(out). Its function is as follows. Produces ATP from ADP in the presence of a proton gradient across the membrane. The alpha chain is a regulatory subunit. The chain is ATP synthase subunit alpha from Bacillus cereus (strain ATCC 14579 / DSM 31 / CCUG 7414 / JCM 2152 / NBRC 15305 / NCIMB 9373 / NCTC 2599 / NRRL B-3711).